The following is a 1161-amino-acid chain: Lysine-specific demethylase 2A (1161 aa).

The residue at position 28 (S28) is a Phosphoserine. The region spanning 148–316 (FSHTRLENMV…MQLKIYSIED (169 aa)) is the JmjC domain. Residue T209 coordinates substrate. Residues H212 and D214 each contribute to the Fe cation site. K229 is a substrate binding site. Residue H284 coordinates Fe cation. S390 and S394 each carry phosphoserine. The span at 419–433 (KTLSGDSSSDSTRGS) shows a compositional bias: low complexity. Residues 419-445 (KTLSGDSSSDSTRGSHNGQVWDPQCSP) form a disordered region. S444 carries the post-translational modification Phosphoserine. Residue K505 forms a Glycyl lysine isopeptide (Lys-Gly) (interchain with G-Cter in SUMO2) linkage. The segment at 532-557 (VPTIPITKPHTMKPAPRLTPVRPAAA) is disordered. Residue T550 is modified to Phosphothreonine. Residue S558 is modified to Phosphoserine. The segment at 564–610 (ARRRRVRCRKCKACVQGECGVCHYCRDMKKFGGPGRMKQSCVLRQCL) adopts a CXXC-type zinc-finger fold. Positions 571, 574, 577, 582, 585, 588, 604, 609, 620, and 623 each coordinate Zn(2+). The PHD-type zinc finger occupies 617-678 (SVTCSLCGEV…CWECPKCYQE (62 aa)). T632 carries the post-translational modification Phosphothreonine. Positions 642, 645, 650, 653, 672, and 675 each coordinate Zn(2+). The residue at position 692 (S692) is a Phosphoserine. The segment at 705-789 (LRSCEEPLTP…PSGKKELSEV (85 aa)) is disordered. T713 is subject to Phosphothreonine. Residues S718 and S731 each carry the phosphoserine modification. Basic and acidic residues-rich tracts occupy residues 746-757 (SDHHSASRDERF) and 771-789 (TMVR…LSEV). Phosphoserine is present on residues S825, S868, and S882. The disordered stretch occupies residues 840–886 (CPARNPQHGDEEGLGGEEEEEEEEEEDDSAEEGGAARLNGRGSWAQD). A compositionally biased stretch (acidic residues) spans 851-870 (EGLGGEEEEEEEEEEDDSAE). In terms of domain architecture, F-box spans 888–935 (DESWMQREVWMSVFRYLSRKELCECMRVCKTWYKWCCDKRLWTKIDLS). LRR repeat units lie at residues 960 to 981 (WTNI…LKDL) and 983 to 1009 (LAGC…DLRW). ADP-ribosylarginine is present on R1019. 4 LRR repeats span residues 1047–1072 (GLDI…DLSH), 1073–1102 (CSHL…NMAG), 1103–1127 (CNKL…DLRG), and 1128–1155 (CKQI…SDEK).

It belongs to the JHDM1 histone demethylase family. Part of a SCF (SKP1-cullin-F-box) protein ligase complex. Interacts with CBX5/HP1A; the interaction promotes CBX5 localization to chromatin. The SKP1-KDM2A complex interacts with UBB. It depends on Fe(2+) as a cofactor. Post-translationally, mono-ADP-ribosylated at Arg-1019 in response to DNA damage, leading to displacement from chromatin, resulting in increased dimethylation of histone H3 at 'Lys-36'.

The protein localises to the nucleus. It is found in the nucleoplasm. Its subcellular location is the chromosome. The catalysed reaction is N(6),N(6)-dimethyl-L-lysyl(36)-[histone H3] + 2 2-oxoglutarate + 2 O2 = L-lysyl(36)-[histone H3] + 2 formaldehyde + 2 succinate + 2 CO2. Functionally, histone demethylase that specifically demethylates 'Lys-36' of histone H3, thereby playing a central role in histone code. Preferentially demethylates dimethylated H3 'Lys-36' residue while it has weak or no activity for mono- and tri-methylated H3 'Lys-36'. May also recognize and bind to some phosphorylated proteins and promote their ubiquitination and degradation. Required to maintain the heterochromatic state. Associates with centromeres and represses transcription of small non-coding RNAs that are encoded by the clusters of satellite repeats at the centromere. Required to sustain centromeric integrity and genomic stability, particularly during mitosis. Regulates circadian gene expression by repressing the transcriptional activator activity of CLOCK-BMAL1 heterodimer and RORA in a catalytically-independent manner. The sequence is that of Lysine-specific demethylase 2A (Kdm2a) from Mus musculus (Mouse).